The primary structure comprises 132 residues: Large ribosomal subunit protein uL14 (132 aa).

It belongs to the universal ribosomal protein uL14 family. In terms of assembly, part of the 50S ribosomal subunit. Forms a cluster with proteins L3 and L24e, part of which may contact the 16S rRNA in 2 intersubunit bridges.

Binds to 23S rRNA. Forms part of two intersubunit bridges in the 70S ribosome. The sequence is that of Large ribosomal subunit protein uL14 from Methanococcus aeolicus (strain ATCC BAA-1280 / DSM 17508 / OCM 812 / Nankai-3).